The chain runs to 284 residues: Small ribosomal subunit protein uS5y/uS5u/uS5v (284 aa).

Positions 1–19 (MAERGGESGAERGGDRGDF) are enriched in basic and acidic residues. A disordered region spans residues 1–51 (MAERGGESGAERGGDRGDFGRGFGGGRGGGRGRDRGPRGRGRRGGRASEET). The segment covering 20–29 (GRGFGGGRGG) has biased composition (gly residues). Positions 95–158 (LKDEVMKIMP…ILAKLSVVPV (64 aa)) constitute an S5 DRBM domain.

Belongs to the universal ribosomal protein uS5 family.

The sequence is that of Small ribosomal subunit protein uS5y/uS5u/uS5v (RPS2B) from Arabidopsis thaliana (Mouse-ear cress).